The following is a 346-amino-acid chain: 3-isopropylmalate dehydrogenase (346 aa).

An NAD(+)-binding site is contributed by 76 to 87 (GPQWTDPNNRPE). Substrate contacts are provided by Arg94, Arg104, Arg132, and Asp217. Residues Asp217, Asp241, and Asp245 each coordinate Mg(2+). 275–287 (GSAPDIANQNLAN) provides a ligand contact to NAD(+).

The protein belongs to the isocitrate and isopropylmalate dehydrogenases family. LeuB type 1 subfamily. In terms of assembly, homodimer. The cofactor is Mg(2+). Mn(2+) serves as cofactor.

It is found in the cytoplasm. It carries out the reaction (2R,3S)-3-isopropylmalate + NAD(+) = 4-methyl-2-oxopentanoate + CO2 + NADH. It participates in amino-acid biosynthesis; L-leucine biosynthesis; L-leucine from 3-methyl-2-oxobutanoate: step 3/4. In terms of biological role, catalyzes the oxidation of 3-carboxy-2-hydroxy-4-methylpentanoate (3-isopropylmalate) to 3-carboxy-4-methyl-2-oxopentanoate. The product decarboxylates to 4-methyl-2 oxopentanoate. The sequence is that of 3-isopropylmalate dehydrogenase from Staphylococcus haemolyticus (strain JCSC1435).